A 311-amino-acid polypeptide reads, in one-letter code: Dihydroorotate dehydrogenase A (fumarate) (311 aa).

FMN is bound by residues Ser-19 and Lys-43–Ser-44. Substrate contacts are provided by residues Lys-43, Asn-67–Leu-71, and Asn-127. Asn-127 lines the FMN pocket. Cys-130 serves as the catalytic Nucleophile. Lys-164 and Val-192 together coordinate FMN. Substrate is bound at residue Asn-193–Ser-194. Residues Gly-221, Gly-249 to Gly-250, and Gly-271 to Thr-272 each bind FMN.

The protein belongs to the dihydroorotate dehydrogenase family. Type 1 subfamily. Homodimer. FMN serves as cofactor.

Its subcellular location is the cytoplasm. The catalysed reaction is (S)-dihydroorotate + fumarate = orotate + succinate. It functions in the pathway pyrimidine metabolism; UMP biosynthesis via de novo pathway. Functionally, catalyzes the conversion of dihydroorotate to orotate with fumarate as the electron acceptor. The chain is Dihydroorotate dehydrogenase A (fumarate) (pyrDA) from Lactococcus lactis subsp. cremoris (Streptococcus cremoris).